A 150-amino-acid chain; its full sequence is Molybdopterin synthase catalytic subunit (150 aa).

Residues K37–R39, H103–R104, K119, and K126–E128 each bind substrate. K119 participates in a covalent cross-link: Glycyl lysine isopeptide (Lys-Gly) (interchain with G-Cter in MoaD).

Belongs to the MoaE family. As to quaternary structure, heterotetramer of 2 MoaD subunits and 2 MoaE subunits. Also stable as homodimer. The enzyme changes between these two forms during catalysis.

It carries out the reaction 2 [molybdopterin-synthase sulfur-carrier protein]-C-terminal-Gly-aminoethanethioate + cyclic pyranopterin phosphate + H2O = molybdopterin + 2 [molybdopterin-synthase sulfur-carrier protein]-C-terminal Gly-Gly + 2 H(+). It functions in the pathway cofactor biosynthesis; molybdopterin biosynthesis. Converts molybdopterin precursor Z to molybdopterin. This requires the incorporation of two sulfur atoms into precursor Z to generate a dithiolene group. The sulfur is provided by MoaD. The sequence is that of Molybdopterin synthase catalytic subunit (moaE) from Escherichia coli (strain K12).